The primary structure comprises 202 residues: LexA repressor (202 aa).

The H-T-H motif DNA-binding region spans 28–48 (IAEIARAIGVSSPHGVREQLR). Catalysis depends on for autocatalytic cleavage activity residues serine 120 and lysine 157.

This sequence belongs to the peptidase S24 family. As to quaternary structure, homodimer.

The catalysed reaction is Hydrolysis of Ala-|-Gly bond in repressor LexA.. In terms of biological role, represses a number of genes involved in the response to DNA damage (SOS response), including recA and lexA. In the presence of single-stranded DNA, RecA interacts with LexA causing an autocatalytic cleavage which disrupts the DNA-binding part of LexA, leading to derepression of the SOS regulon and eventually DNA repair. This is LexA repressor from Methylococcus capsulatus (strain ATCC 33009 / NCIMB 11132 / Bath).